The sequence spans 735 residues: Nuclear intron maturase 2, mitochondrial (735 aa).

The transit peptide at 1 to 12 (MRRSFSVLGPYK) directs the protein to the mitochondrion. One can recognise a Reverse transcriptase domain in the interval 161–460 (RDKTDYESLS…KGIMFLDHVL (300 aa)). The tract at residues 485–653 (GTLLSVTASL…KFLIEYLTLD (169 aa)) is intron maturase type-2. The interval 707 to 735 (SSTYNRDNDDQKNKEEDEDSEDGLRIARM) is disordered. The segment covering 712-721 (RDNDDQKNKE) has biased composition (basic and acidic residues).

This sequence belongs to the plant nuclear intron maturase (nMat) family. In terms of assembly, associated to a large ribonucleoprotein complex in mitochondria containing group-II intron RNAs.

It is found in the mitochondrion. Its function is as follows. Nuclear-encoded maturase required for splicing of group-II introns in mitochondria. Involved in the splicing of mitochondrial COX2, NAD1 and NAD7 transcripts. Necessary for mitochondrial biogenesis during early developmental stages. This is Nuclear intron maturase 2, mitochondrial from Arabidopsis thaliana (Mouse-ear cress).